The following is a 239-amino-acid chain: 4-hydroxy-tetrahydrodipicolinate reductase (239 aa).

NAD(+) is bound by residues 12–17 (GASGRM), 94–96 (GTT), and 118–121 (ASNF). His150 functions as the Proton donor/acceptor in the catalytic mechanism. His151 provides a ligand contact to (S)-2,3,4,5-tetrahydrodipicolinate. Lys154 functions as the Proton donor in the catalytic mechanism. 160–161 (GT) contacts (S)-2,3,4,5-tetrahydrodipicolinate.

This sequence belongs to the DapB family.

Its subcellular location is the cytoplasm. The enzyme catalyses (S)-2,3,4,5-tetrahydrodipicolinate + NAD(+) + H2O = (2S,4S)-4-hydroxy-2,3,4,5-tetrahydrodipicolinate + NADH + H(+). It catalyses the reaction (S)-2,3,4,5-tetrahydrodipicolinate + NADP(+) + H2O = (2S,4S)-4-hydroxy-2,3,4,5-tetrahydrodipicolinate + NADPH + H(+). It functions in the pathway amino-acid biosynthesis; L-lysine biosynthesis via DAP pathway; (S)-tetrahydrodipicolinate from L-aspartate: step 4/4. Functionally, catalyzes the conversion of 4-hydroxy-tetrahydrodipicolinate (HTPA) to tetrahydrodipicolinate. The chain is 4-hydroxy-tetrahydrodipicolinate reductase from Stenotrophomonas maltophilia (strain K279a).